Here is a 66-residue protein sequence, read N- to C-terminus: Large ribosomal subunit protein uL29 (66 aa).

This sequence belongs to the universal ribosomal protein uL29 family.

The protein is Large ribosomal subunit protein uL29 of Francisella philomiragia subsp. philomiragia (strain ATCC 25017 / CCUG 19701 / FSC 153 / O#319-036).